We begin with the raw amino-acid sequence, 406 residues long: Argininosuccinate synthase (406 aa).

ATP contacts are provided by residues 11-19 (AYSGGLDTS) and Ala-38. Positions 91 and 96 each coordinate L-citrulline. ATP is bound at residue Gly-121. Residues Thr-123, Asn-127, and Asp-128 each coordinate L-aspartate. Asn-127 provides a ligand contact to L-citrulline. Positions 131, 181, 190, 266, and 278 each coordinate L-citrulline.

It belongs to the argininosuccinate synthase family. Type 1 subfamily. In terms of assembly, homotetramer.

It is found in the cytoplasm. It carries out the reaction L-citrulline + L-aspartate + ATP = 2-(N(omega)-L-arginino)succinate + AMP + diphosphate + H(+). It participates in amino-acid biosynthesis; L-arginine biosynthesis; L-arginine from L-ornithine and carbamoyl phosphate: step 2/3. The sequence is that of Argininosuccinate synthase from Campylobacter jejuni subsp. jejuni serotype O:23/36 (strain 81-176).